The following is a 231-amino-acid chain: Uridylate cyclase (231 aa).

Residues 46–178 (TVLYADLDGS…RAANYAAKLT (133 aa)) enclose the Guanylate cyclase domain. Tyr-49 is a binding site for a ribonucleoside 5'-triphosphate. Positions 51 and 95 each coordinate Mn(2+). Arg-96 is a binding site for a ribonucleoside 5'-triphosphate.

It belongs to the adenylyl cyclase class-4/guanylyl cyclase family. Pyrimidine cyclase subfamily. As to quaternary structure, homodimer. Requires Mn(2+) as cofactor.

It localises to the cytoplasm. It catalyses the reaction UTP = 3',5'-cyclic UMP + diphosphate. Pycsar (pyrimidine cyclase system for antiphage resistance) provides immunity against bacteriophage. The pyrimidine cyclase (PycC) synthesizes cyclic nucleotides in response to infection; these serve as specific second messenger signals. The signal activates the adjacent effector, leading to bacterial cell death and abortive phage infection. A clade B Pycsar system. Its function is as follows. The pyrimidine cyclase gene of a two-gene Pycsar system, generates cyclic UMP (cUMP) from UTP probably in response to bacteriophage infection. Expression of this and adjacent effector XpPycTIR (AC P0DV29) confers resistance to bacteriophage T7. When cells expressing the Pycsar system are infected phage T7 at low multiplicity of infection (0.2 MOI) the culture survives, at 2.0 MOI bacteria enter growth arrest. The same cells enter growth arrest after exposure to 2.5 mM cUMP but not cCMP; the effector protein responds only to the cUMP produced by its cognate NTP cyclase. This is Uridylate cyclase from Xanthomonas perforans.